Reading from the N-terminus, the 87-residue chain is Small ribosomal subunit protein bS20 (87 aa).

Positions 1–26 (MANHKSAIKRHKQSQKRAARNRAAKT) are disordered.

This sequence belongs to the bacterial ribosomal protein bS20 family.

Functionally, binds directly to 16S ribosomal RNA. The polypeptide is Small ribosomal subunit protein bS20 (Nitratidesulfovibrio vulgaris (strain DSM 19637 / Miyazaki F) (Desulfovibrio vulgaris)).